A 288-amino-acid chain; its full sequence is tRNA dimethylallyltransferase (288 aa).

17–24 is a binding site for ATP; sequence GPTASGKT. 19–24 is a binding site for substrate; it reads TASGKT.

Belongs to the IPP transferase family. Monomer. Mg(2+) serves as cofactor.

The enzyme catalyses adenosine(37) in tRNA + dimethylallyl diphosphate = N(6)-dimethylallyladenosine(37) in tRNA + diphosphate. In terms of biological role, catalyzes the transfer of a dimethylallyl group onto the adenine at position 37 in tRNAs that read codons beginning with uridine, leading to the formation of N6-(dimethylallyl)adenosine (i(6)A). The protein is tRNA dimethylallyltransferase of Jannaschia sp. (strain CCS1).